An 876-amino-acid chain; its full sequence is Probable LRR receptor-like protein kinase At1g51890 (876 aa).

The N-terminal stretch at 1-19 is a signal peptide; sequence MRFLSFLIFVFAVLGLVQA. Residues 20-500 lie on the Extracellular side of the membrane; that stretch reads QDQSGFISLD…TGKNSTNVVA (481 aa). N-linked (GlcNAc...) asparagine glycosylation is found at Asn45, Asn90, Asn138, Asn177, Asn251, Asn259, Asn284, Asn290, Asn327, Asn335, Asn397, Asn412, and Asn417. 3 LRR repeats span residues 407–430, 431–453, and 455–476; these read QIIS…SKLT, HLRE…FSDM, and NLTL…ETLQ. N-linked (GlcNAc...) asparagine glycans are attached at residues Asn455, Asn460, Asn468, Asn481, and Asn494. The chain crosses the membrane as a helical span at residues 501-521; sequence IAASVASVFAVLVILAIVFVV. The Cytoplasmic portion of the chain corresponds to 522-872; sequence IRKKQRTNEA…FSPSSASDFS (351 aa). Thr561 is subject to Phosphothreonine. The 273-residue stretch at 570–842 folds into the Protein kinase domain; it reads KNFERVLGKG…HVVMELNECL (273 aa). ATP contacts are provided by residues 576 to 584 and Lys597; that span reads LGKGGFGTV. Tyr642 carries the phosphotyrosine modification. Residue Asp694 is the Proton acceptor of the active site. Residues Thr729 and Thr734 each carry the phosphothreonine modification. Position 742 is a phosphotyrosine (Tyr742).

Belongs to the protein kinase superfamily. Ser/Thr protein kinase family.

It is found in the cell membrane. It catalyses the reaction L-seryl-[protein] + ATP = O-phospho-L-seryl-[protein] + ADP + H(+). The enzyme catalyses L-threonyl-[protein] + ATP = O-phospho-L-threonyl-[protein] + ADP + H(+). The polypeptide is Probable LRR receptor-like protein kinase At1g51890 (Arabidopsis thaliana (Mouse-ear cress)).